We begin with the raw amino-acid sequence, 218 residues long: Pyridoxal phosphate homeostasis protein (218 aa).

At Lys-25 the chain carries N6-(pyridoxal phosphate)lysine.

It belongs to the pyridoxal phosphate-binding protein YggS/PROSC family.

Pyridoxal 5'-phosphate (PLP)-binding protein, which is involved in PLP homeostasis. This is Pyridoxal phosphate homeostasis protein from Synechocystis sp. (strain ATCC 27184 / PCC 6803 / Kazusa).